The sequence spans 185 residues: Ribosome-recycling factor (185 aa).

It belongs to the RRF family.

It localises to the cytoplasm. Responsible for the release of ribosomes from messenger RNA at the termination of protein biosynthesis. May increase the efficiency of translation by recycling ribosomes from one round of translation to another. The protein is Ribosome-recycling factor of Aliivibrio salmonicida (strain LFI1238) (Vibrio salmonicida (strain LFI1238)).